A 95-amino-acid polypeptide reads, in one-letter code: Aspartyl/glutamyl-tRNA(Asn/Gln) amidotransferase subunit C (95 aa).

This sequence belongs to the GatC family. In terms of assembly, heterotrimer of A, B and C subunits.

The catalysed reaction is L-glutamyl-tRNA(Gln) + L-glutamine + ATP + H2O = L-glutaminyl-tRNA(Gln) + L-glutamate + ADP + phosphate + H(+). It carries out the reaction L-aspartyl-tRNA(Asn) + L-glutamine + ATP + H2O = L-asparaginyl-tRNA(Asn) + L-glutamate + ADP + phosphate + 2 H(+). Functionally, allows the formation of correctly charged Asn-tRNA(Asn) or Gln-tRNA(Gln) through the transamidation of misacylated Asp-tRNA(Asn) or Glu-tRNA(Gln) in organisms which lack either or both of asparaginyl-tRNA or glutaminyl-tRNA synthetases. The reaction takes place in the presence of glutamine and ATP through an activated phospho-Asp-tRNA(Asn) or phospho-Glu-tRNA(Gln). The sequence is that of Aspartyl/glutamyl-tRNA(Asn/Gln) amidotransferase subunit C from Geotalea uraniireducens (strain Rf4) (Geobacter uraniireducens).